Consider the following 340-residue polypeptide: Fructose-1,6-bisphosphatase class 1 (340 aa).

Positions 107, 126, 128, and 129 each coordinate Mg(2+). Asparagine 215 is a binding site for substrate. Residue glutamate 287 coordinates Mg(2+).

This sequence belongs to the FBPase class 1 family. In terms of assembly, homotetramer. It depends on Mg(2+) as a cofactor.

Its subcellular location is the cytoplasm. The enzyme catalyses beta-D-fructose 1,6-bisphosphate + H2O = beta-D-fructose 6-phosphate + phosphate. Its pathway is carbohydrate biosynthesis; gluconeogenesis. This is Fructose-1,6-bisphosphatase class 1 from Brucella anthropi (strain ATCC 49188 / DSM 6882 / CCUG 24695 / JCM 21032 / LMG 3331 / NBRC 15819 / NCTC 12168 / Alc 37) (Ochrobactrum anthropi).